The following is a 315-amino-acid chain: Protoheme IX farnesyltransferase (315 aa).

9 helical membrane passes run 38–58 (IIEL…QGVP), 62–82 (LVLL…ALNM), 111–131 (LVFG…TVNW), 132–152 (LSAW…TMIL), 159–179 (NIVW…SAVT), 184–204 (WAPV…YWPL), 233–253 (IVIY…LGYT), 255–275 (WFYT…AHGL), and 293–313 (LFHW…VDPF).

This sequence belongs to the UbiA prenyltransferase family. Protoheme IX farnesyltransferase subfamily.

The protein resides in the cell membrane. The enzyme catalyses heme b + (2E,6E)-farnesyl diphosphate + H2O = Fe(II)-heme o + diphosphate. It participates in porphyrin-containing compound metabolism; heme O biosynthesis; heme O from protoheme: step 1/1. Converts heme B (protoheme IX) to heme O by substitution of the vinyl group on carbon 2 of heme B porphyrin ring with a hydroxyethyl farnesyl side group. In Streptomyces coelicolor (strain ATCC BAA-471 / A3(2) / M145), this protein is Protoheme IX farnesyltransferase.